Consider the following 214-residue polypeptide: Adenylate kinase (214 aa).

An ATP-binding site is contributed by 10 to 15 (GAGKGT). The segment at 30–59 (STGDIFRANIKNGTELGKKAKTYMDQGALV) is NMP. AMP-binding positions include Thr31, Arg36, 57–59 (ALV), 85–88 (GFPR), and Gln92. The segment at 126–163 (GRRACLNCGATYHIVFNPTKVEGKCDACGADTVLRDDD) is LID. Arg127 serves as a coordination point for ATP. The Zn(2+) site is built by Cys130 and Cys133. Residue 136–137 (TY) coordinates ATP. Residues Cys150 and Cys153 each contribute to the Zn(2+) site. Positions 160 and 171 each coordinate AMP. ATP is bound at residue Lys199.

This sequence belongs to the adenylate kinase family. Monomer.

It is found in the cytoplasm. It catalyses the reaction AMP + ATP = 2 ADP. The protein operates within purine metabolism; AMP biosynthesis via salvage pathway; AMP from ADP: step 1/1. Its function is as follows. Catalyzes the reversible transfer of the terminal phosphate group between ATP and AMP. Plays an important role in cellular energy homeostasis and in adenine nucleotide metabolism. The polypeptide is Adenylate kinase (Agathobacter rectalis (strain ATCC 33656 / DSM 3377 / JCM 17463 / KCTC 5835 / VPI 0990) (Eubacterium rectale)).